The chain runs to 407 residues: Imidazolonepropionase (407 aa).

Residues His75 and His77 each contribute to the Fe(3+) site. His75 and His77 together coordinate Zn(2+). Arg84, Tyr142, and His169 together coordinate 4-imidazolone-5-propanoate. Tyr142 provides a ligand contact to N-formimidoyl-L-glutamate. His232 serves as a coordination point for Fe(3+). Residue His232 coordinates Zn(2+). Position 235 (Gln235) interacts with 4-imidazolone-5-propanoate. Fe(3+) is bound at residue Asp306. Residue Asp306 participates in Zn(2+) binding. N-formimidoyl-L-glutamate is bound by residues Asn308 and Gly310. Residue Thr311 participates in 4-imidazolone-5-propanoate binding.

This sequence belongs to the metallo-dependent hydrolases superfamily. HutI family. It depends on Zn(2+) as a cofactor. Fe(3+) serves as cofactor.

It is found in the cytoplasm. It carries out the reaction 4-imidazolone-5-propanoate + H2O = N-formimidoyl-L-glutamate. It participates in amino-acid degradation; L-histidine degradation into L-glutamate; N-formimidoyl-L-glutamate from L-histidine: step 3/3. Functionally, catalyzes the hydrolytic cleavage of the carbon-nitrogen bond in imidazolone-5-propanoate to yield N-formimidoyl-L-glutamate. It is the third step in the universal histidine degradation pathway. The polypeptide is Imidazolonepropionase (Rhodococcus jostii (strain RHA1)).